The chain runs to 109 residues: C-X-C motif chemokine 13 (109 aa).

Residues 1 to 21 (MRLSTATLLLLLASCLSPGHG) form the signal peptide. Intrachain disulfides connect Cys32–Cys59 and Cys34–Cys75.

This sequence belongs to the intercrine alpha (chemokine CxC) family. As to expression, found in spleen (B-cell-rich zone or follicles), Peyer patches (strongest within germinal centers and extending to the mantle zone) and lymph nodes (in reticular pattern in follicles).

Its subcellular location is the secreted. Functionally, strongly chemotactic for B-lymphocytes, weakly for spleen monocytes and macrophages but no chemotactic activity for granulocytes. Binds to BLR1/CXCR5. May play a role in directing the migration of B-lymphocytes to follicles in secondary lymphoid organs. In Mus musculus (Mouse), this protein is C-X-C motif chemokine 13 (Cxcl13).